The chain runs to 256 residues: Probable ribosomal RNA small subunit methyltransferase A (256 aa).

The S-adenosyl-L-methionine site is built by histidine 8, leucine 10, glycine 34, glutamate 55, aspartate 83, and asparagine 98.

The protein belongs to the class I-like SAM-binding methyltransferase superfamily. rRNA adenine N(6)-methyltransferase family. RsmA subfamily.

It localises to the cytoplasm. Its function is as follows. Specifically dimethylates two adjacent adenosines in the loop of a conserved hairpin near the 3'-end of 16S rRNA in the 30S particle. May play a critical role in biogenesis of 30S subunits. The sequence is that of Probable ribosomal RNA small subunit methyltransferase A from Methanospirillum hungatei JF-1 (strain ATCC 27890 / DSM 864 / NBRC 100397 / JF-1).